Reading from the N-terminus, the 151-residue chain is Small ribosomal subunit protein uS13m (151 aa).

It belongs to the universal ribosomal protein uS13 family. Component of the mitochondrial small ribosomal subunit (mt-SSU). Mature yeast 74S mitochondrial ribosomes consist of a small (37S) and a large (54S) subunit. The 37S small subunit contains a 15S ribosomal RNA (15S mt-rRNA) and at least 32 different proteins. The 54S large subunit contains a 21S rRNA (21S mt-rRNA) and at least 45 different proteins.

The protein resides in the mitochondrion. Component of the mitochondrial ribosome (mitoribosome), a dedicated translation machinery responsible for the synthesis of mitochondrial genome-encoded proteins, including at least some of the essential transmembrane subunits of the mitochondrial respiratory chain. The mitoribosomes are attached to the mitochondrial inner membrane and translation products are cotranslationally integrated into the membrane. In Schizosaccharomyces pombe (strain 972 / ATCC 24843) (Fission yeast), this protein is Small ribosomal subunit protein uS13m (sws2).